The primary structure comprises 615 residues: Dihydroxy-acid dehydratase (615 aa).

Residue Asp81 participates in Mg(2+) binding. Position 122 (Cys122) interacts with [2Fe-2S] cluster. Asp123 and Lys124 together coordinate Mg(2+). N6-carboxylysine is present on Lys124. Cys195 is a binding site for [2Fe-2S] cluster. Glu491 is a Mg(2+) binding site. Residue Ser517 is the Proton acceptor of the active site.

It belongs to the IlvD/Edd family. Homodimer. Requires [2Fe-2S] cluster as cofactor. The cofactor is Mg(2+).

The catalysed reaction is (2R)-2,3-dihydroxy-3-methylbutanoate = 3-methyl-2-oxobutanoate + H2O. The enzyme catalyses (2R,3R)-2,3-dihydroxy-3-methylpentanoate = (S)-3-methyl-2-oxopentanoate + H2O. It functions in the pathway amino-acid biosynthesis; L-isoleucine biosynthesis; L-isoleucine from 2-oxobutanoate: step 3/4. The protein operates within amino-acid biosynthesis; L-valine biosynthesis; L-valine from pyruvate: step 3/4. In terms of biological role, functions in the biosynthesis of branched-chain amino acids. Catalyzes the dehydration of (2R,3R)-2,3-dihydroxy-3-methylpentanoate (2,3-dihydroxy-3-methylvalerate) into 2-oxo-3-methylpentanoate (2-oxo-3-methylvalerate) and of (2R)-2,3-dihydroxy-3-methylbutanoate (2,3-dihydroxyisovalerate) into 2-oxo-3-methylbutanoate (2-oxoisovalerate), the penultimate precursor to L-isoleucine and L-valine, respectively. The polypeptide is Dihydroxy-acid dehydratase (Shewanella piezotolerans (strain WP3 / JCM 13877)).